The primary structure comprises 147 residues: Ribonuclease P protein component 2 (147 aa).

It belongs to the eukaryotic/archaeal RNase P protein component 2 family. In terms of assembly, consists of a catalytic RNA component and at least 4-5 protein subunits.

It localises to the cytoplasm. The catalysed reaction is Endonucleolytic cleavage of RNA, removing 5'-extranucleotides from tRNA precursor.. Functionally, part of ribonuclease P, a protein complex that generates mature tRNA molecules by cleaving their 5'-ends. The chain is Ribonuclease P protein component 2 from Methanocorpusculum labreanum (strain ATCC 43576 / DSM 4855 / Z).